Here is a 123-residue protein sequence, read N- to C-terminus: Large ribosomal subunit protein bL12 (123 aa).

This sequence belongs to the bacterial ribosomal protein bL12 family. As to quaternary structure, homodimer. Part of the ribosomal stalk of the 50S ribosomal subunit. Forms a multimeric L10(L12)X complex, where L10 forms an elongated spine to which 2 to 4 L12 dimers bind in a sequential fashion. Binds GTP-bound translation factors.

Its function is as follows. Forms part of the ribosomal stalk which helps the ribosome interact with GTP-bound translation factors. Is thus essential for accurate translation. This Bartonella henselae (strain ATCC 49882 / DSM 28221 / CCUG 30454 / Houston 1) (Rochalimaea henselae) protein is Large ribosomal subunit protein bL12.